The chain runs to 420 residues: Ribosome biogenesis protein WDR12 homolog (420 aa).

Residues 10-92 (VQVHLKTKQE…EDAIEIEYVE (83 aa)) form a ubiquitin-like (UBL) domain region. WD repeat units lie at residues 104 to 142 (LHDD…LTIS), 143 to 185 (GHTA…NAVD), 192 to 231 (GHER…GVEG), 250 to 288 (GHRE…IKTE), 290 to 329 (STNK…GSVV), 335 to 375 (GHNA…APLY), and 379 to 417 (GHGD…AEDT).

This sequence belongs to the WD repeat WDR12/YTM1 family.

It is found in the nucleus. Its subcellular location is the nucleolus. The protein resides in the nucleoplasm. Functionally, required for maturation of ribosomal RNAs and formation of the large ribosomal subunit. In Drosophila sechellia (Fruit fly), this protein is Ribosome biogenesis protein WDR12 homolog.